The primary structure comprises 204 residues: Large ribosomal subunit protein uL22m (204 aa).

The N-terminal 38 residues, 1 to 38 (MAAVILERLGALWVQNLRGKLALGILPQSHIHTSASLE), are a transit peptide targeting the mitochondrion.

The protein belongs to the universal ribosomal protein uL22 family. As to quaternary structure, component of the mitochondrial ribosome large subunit (39S) which comprises a 16S rRNA and about 50 distinct proteins.

The protein localises to the mitochondrion. The chain is Large ribosomal subunit protein uL22m (MRPL22) from Bos taurus (Bovine).